The sequence spans 494 residues: Cytochrome P450 2A4 (494 aa).

Serine 131 is modified (phosphoserine). Lysine 379 bears the N6-acetyllysine mark. Cysteine 439 provides a ligand contact to heme.

Belongs to the cytochrome P450 family. Requires heme as cofactor. Kidney and lung. Expressed in liver, with a strong circadian rhythmicity. Circadian expression is regulated by DBP.

The protein localises to the endoplasmic reticulum membrane. It localises to the microsome membrane. The enzyme catalyses an organic molecule + reduced [NADPH--hemoprotein reductase] + O2 = an alcohol + oxidized [NADPH--hemoprotein reductase] + H2O + H(+). In terms of biological role, highly active in the 15-alpha-hydroxylation of testosterone. Also active in the 15-alpha-hydroxylation of progesterone and androstenedione. Little or no activity on corticosterone, pregnenolone, dehydroepiandrosterone, estradiol or estriol. The protein is Cytochrome P450 2A4 (Cyp2a4) of Mus musculus (Mouse).